The chain runs to 336 residues: Methionyl-tRNA formyltransferase (336 aa).

(6S)-5,6,7,8-tetrahydrofolate is bound at residue 110 to 113 (SLLP).

The protein belongs to the Fmt family.

The enzyme catalyses L-methionyl-tRNA(fMet) + (6R)-10-formyltetrahydrofolate = N-formyl-L-methionyl-tRNA(fMet) + (6S)-5,6,7,8-tetrahydrofolate + H(+). In terms of biological role, attaches a formyl group to the free amino group of methionyl-tRNA(fMet). The formyl group appears to play a dual role in the initiator identity of N-formylmethionyl-tRNA by promoting its recognition by IF2 and preventing the misappropriation of this tRNA by the elongation apparatus. This chain is Methionyl-tRNA formyltransferase, found in Prochlorococcus marinus (strain NATL2A).